A 106-amino-acid polypeptide reads, in one-letter code: Iron-sulfur cluster assembly protein CyaY (106 aa).

Belongs to the frataxin family.

Its function is as follows. Involved in iron-sulfur (Fe-S) cluster assembly. May act as a regulator of Fe-S biogenesis. This Escherichia coli O139:H28 (strain E24377A / ETEC) protein is Iron-sulfur cluster assembly protein CyaY.